The primary structure comprises 543 residues: MLQIASGNREEGQVVELKKTKYLPYLFNLVMPKSFYHSHNRIVVARLYSNVHKHDKQAAEFFEGFQTPCFEVPASMFPGEAPLNKIVFMPPVMLPMGFEAGGVFGPGVLPRRSYPIDLTASGHKGQSPPLFVGLRRLYVQLPSEIESFLDKMGEFPATQDTLVYGMRRSNQLLKEEQAQELMLRNDLSLSMAYNLPAPPTPPSPYPYRHVPVQYNIYTPDLSNVLMMMPHQRKLTVAILSTVNNPHVPSVALATMGDEECPKFELPSDVFPICEGVNRPIFLPRRFLPKGFESGCVFKPGSLSELWFMGYMGRFSPPQPQHNCAITPPLFVGKISRVVLAFDLMKNIQMEYGAAQSSAQSEGSLNAVEPKKPNVPITKGFLVMETEHPTPPSGGYSLQSYQEGSAKGCVVKVEKGETQEMDEAHPTKEESKSEEEGEVQSGSQEEKYLSWFKVDSDIDLIAETMVDMGTAQMSLIDEEALPGVDGACVLNQLREVFEDRNEIRQNIDQLIHDHIYRMNRDRMLALRLPIRTCFRCGLLPCRHF.

The segment covering 415-430 (GETQEMDEAHPTKEES) has biased composition (basic and acidic residues). A disordered region spans residues 415–443 (GETQEMDEAHPTKEESKSEEEGEVQSGSQ).

Belongs to the DM7 family.

In Drosophila erecta (Fruit fly), this protein is DM7 family protein GG19680.